The primary structure comprises 163 residues: Keratin-associated protein 11-1 (163 aa).

Repeat copies occupy residues 111 to 120 (CQPLGGISSV), 121 to 130 (CQPVGGISTV), 131 to 140 (CQPVGGVSTV), and 141 to 150 (CQPACGVSRT). Residues 111-150 (CQPLGGISSVCQPVGGISTVCQPVGGVSTVCQPACGVSRT) are 4 X 10 AA approximate repeats.

It belongs to the PMG family. In terms of tissue distribution, expressed in the upper matrix and in the entire hair cortex.

Its function is as follows. In the hair cortex, hair keratin intermediate filaments are embedded in an interfilamentous matrix, consisting of hair keratin-associated proteins (KRTAP), which are essential for the formation of a rigid and resistant hair shaft through their extensive disulfide bond cross-linking with abundant cysteine residues of hair keratins. The matrix proteins include the high-sulfur and high-glycine-tyrosine keratins. This Homo sapiens (Human) protein is Keratin-associated protein 11-1 (KRTAP11-1).